The chain runs to 557 residues: TGF-beta receptor type-2 (557 aa).

The signal sequence occupies residues M1–P23. The Extracellular portion of the chain corresponds to A24–K155. 6 disulfides stabilise this stretch: C41-C74, C44-C61, C51-C57, C67-C91, C111-C126, and C128-C133. N62 and N84 each carry an N-linked (GlcNAc...) asparagine glycan. Residues V156–Y176 form a helical membrane-spanning segment. Residues A177–K557 lie on the Cytoplasmic side of the membrane. The Protein kinase domain maps to I234–L537. Residues V240 to V248 and K267 each bind ATP. Catalysis depends on D369, which acts as the Proton acceptor.

It belongs to the protein kinase superfamily. TKL Ser/Thr protein kinase family. TGFB receptor subfamily. As to quaternary structure, heterohexamer; TGFB1, TGFB2 and TGFB3 homodimeric ligands assemble a functional receptor composed of two TGFBR1 and TGFBR2 heterodimers to form a ligand-receptor heterohexamer. Mg(2+) serves as cofactor. It depends on Mn(2+) as a cofactor. Phosphorylated on a Ser/Thr residue in the cytoplasmic domain. As to expression, detected at low levels in embryonic heart, brain and lung. Detected at high levels in hatchling heart and lung.

Its subcellular location is the cell membrane. The protein resides in the membrane raft. The enzyme catalyses L-threonyl-[receptor-protein] + ATP = O-phospho-L-threonyl-[receptor-protein] + ADP + H(+). It carries out the reaction L-seryl-[receptor-protein] + ATP = O-phospho-L-seryl-[receptor-protein] + ADP + H(+). In terms of biological role, transmembrane serine/threonine kinase forming with the TGF-beta type I serine/threonine kinase receptor, TGFBR1, the non-promiscuous receptor for the TGF-beta cytokines TGFB1, TGFB2 and TGFB3. Transduces the TGFB1, TGFB2 and TGFB3 signal from the cell surface to the cytoplasm and is thus regulating a plethora of physiological and pathological processes including cell cycle arrest in epithelial and hematopoietic cells, control of mesenchymal cell proliferation and differentiation, wound healing, extracellular matrix production, immunosuppression and carcinogenesis. The formation of the receptor complex composed of 2 TGFBR1 and 2 TGFBR2 molecules symmetrically bound to the cytokine dimer results in the phosphorylation and the activation of TGFRB1 by the constitutively active TGFBR2. Activated TGFBR1 phosphorylates SMAD2 which dissociates from the receptor and interacts with SMAD4. The SMAD2-SMAD4 complex is subsequently translocated to the nucleus where it modulates the transcription of the TGF-beta-regulated genes. This constitutes the canonical SMAD-dependent TGF-beta signaling cascade. Also involved in non-canonical, SMAD-independent TGF-beta signaling pathways. The chain is TGF-beta receptor type-2 (TGFBR2) from Gallus gallus (Chicken).